A 354-amino-acid polypeptide reads, in one-letter code: Probable glucan endo-1,3-beta-glucosidase BG5 (354 aa).

The N-terminal stretch at 1–30 (MLYLPKKLFLFFFSCIVVIVNYNNSDFVNA) is a signal peptide. Glutamate 137 (proton donor) is an active-site residue. Catalysis depends on glutamate 276, which acts as the Nucleophile. Residue asparagine 286 is glycosylated (N-linked (GlcNAc...) asparagine).

Belongs to the glycosyl hydrolase 17 family.

The protein localises to the secreted. The catalysed reaction is Hydrolysis of (1-&gt;3)-beta-D-glucosidic linkages in (1-&gt;3)-beta-D-glucans.. Its function is as follows. May play a role in plant defense against pathogens. The chain is Probable glucan endo-1,3-beta-glucosidase BG5 from Arabidopsis thaliana (Mouse-ear cress).